The chain runs to 361 residues: uncharacterized protein (361 aa).

This is an uncharacterized protein from Schizosaccharomyces pombe (strain 972 / ATCC 24843) (Fission yeast).